The sequence spans 314 residues: Formate-nitrite transporter (314 aa).

Topologically, residues 1–47 (MSKGKSKYVIDPISVKTACTSEESYIRCVEYGKGKAHYPNLSLLAKA) are cytoplasmic. Residues 48–68 (ILAGVFVGVCAHASGIAGGHF) form a helical membrane-spanning segment. Residues 69 to 78 (YYHKLREYVG) lie on the Extracellular side of the membrane. The chain crosses the membrane as a helical span at residues 79–99 (ISMSAFVYGFTFPIAFLCIIA). Residues 100–128 (TGSDLFTGNTLAVTTALLQRKVSLLQYLR) lie on the Cytoplasmic side of the membrane. A helical membrane pass occupies residues 129 to 149 (VMSISLFGNYLGAVSFAFFVS). Residues 150 to 185 (HLSGAYEKHTDVTKNHIFQFLNDIAEKKISHTFIQC) are Extracellular-facing. A helical membrane pass occupies residues 186–206 (ICLAIGCNIFVCLAVYFVLTI). The Cytoplasmic segment spans residues 207 to 211 (KDGSG). The chain crosses the membrane as a helical span at residues 212–232 (MVFSVFFAVYAFAIAGYEHII). Residues 233 to 257 (ANMYTLNLALMVEAKVTWSKVYFHN) are Extracellular-facing. The helical transmembrane segment at 258–278 (LLPTLIGNYIAGALVLACPLF) threads the bilayer. Residues 279–314 (YIYRNSYRDYERTRGDGSNCGLRSLSIEMQNGSNGN) are Cytoplasmic-facing.

Belongs to the FNT transporter (TC 1.A.16) family. Homopentamer.

The protein localises to the cell membrane. It localises to the vacuole membrane. It carries out the reaction (S)-lactate(in) + H(+)(in) = (S)-lactate(out) + H(+)(out). The catalysed reaction is formate(in) + H(+)(in) = formate(out) + H(+)(out). It catalyses the reaction pyruvate(out) + H(+)(out) = pyruvate(in) + H(+)(in). The enzyme catalyses acetate(out) + H(+)(out) = acetate(in) + H(+)(in). With respect to regulation, inhibited by the Malaria Box compound MMV007839 and its derivatives BH296 and BH267.meta. Monocarboxylate-proton symporter that mediates the efflux of the waste product lactate in the intraerythrocytic parasites; active in acidic-to-neutral pH range. Transports L-lactate. The polypeptide is Formate-nitrite transporter (Plasmodium knowlesi (strain H)).